We begin with the raw amino-acid sequence, 306 residues long: Serine/threonine-protein kinase csk1 (306 aa).

Positions 11-306 (LTDIRHLTDG…KVSARLSQYA (296 aa)) constitute a Protein kinase domain. ATP contacts are provided by residues 17-25 (LTDGTISEV) and Lys-40. Asp-129 acts as the Proton acceptor in catalysis.

The protein belongs to the protein kinase superfamily. CMGC Ser/Thr protein kinase family. CDC2/CDKX subfamily.

The enzyme catalyses L-seryl-[protein] + ATP = O-phospho-L-seryl-[protein] + ADP + H(+). It catalyses the reaction L-threonyl-[protein] + ATP = O-phospho-L-threonyl-[protein] + ADP + H(+). Acts as a CAK-activating kinase that specifically activates crk1 of the crk1-mcs2 CAK complex. The polypeptide is Serine/threonine-protein kinase csk1 (csk1) (Schizosaccharomyces pombe (strain 972 / ATCC 24843) (Fission yeast)).